A 1187-amino-acid polypeptide reads, in one-letter code: Myelin transcription factor 1-like protein (1187 aa).

The segment at 1–22 is disordered; the sequence is MDVDSEEKRHRTRSKGVRVPVE. The CCHHC-type 1 zinc-finger motif lies at 22–65; sequence EPAIQELFSCPTPGCDGSGHVSGKYARHRSVYGCPLAKKRKTQD. 4 residues coordinate Zn(2+): Cys31, Cys36, His49, and Cys55. 2 disordered regions span residues 56-178 and 221-248; these read PLAK…QMSC and RTESEMNSNTSNSLEDDSDKNENLGRKS. A compositionally biased stretch (acidic residues) spans 89 to 172; sequence ECYESDGTED…EEEEEEEENE (84 aa). Ser251 is subject to Phosphoserine. Disordered regions lie at residues 343 to 422 and 450 to 514; these read SETN…DRSE and REKM…GCDG. Positions 344-358 are enriched in polar residues; it reads ETNPQDRSQPPNMSV. Basic and acidic residues-rich tracts occupy residues 362–377, 401–412, 450–488, and 496–506; these read VRQEDDFPGRTPDRSY, AKEDGCHERDDD, REKMAMDAGRRDNLRSYEDQSPRQLAGEDRKSKSSDSHV, and DPSRTEKRESK. CCHHC-type zinc fingers lie at residues 498-541 and 542-585; these read SRTE…PPEI and LAMH…KLAK. Positions 507, 512, 525, 531, 551, 556, 569, and 575 each coordinate Zn(2+). The disordered stretch occupies residues 686–710; the sequence is ASPSSSTTSSYAPSSSSNLSCGGGS. 3 consecutive CCHHC-type zinc fingers follow at residues 897 to 940, 946 to 989, and 999 to 1042; these read LATS…GIRI, DKED…QKDG, and KSVK…MKKA. Zn(2+)-binding residues include Cys906, Cys911, His924, Cys930, Cys955, Cys960, His973, Cys979, Cys1008, Cys1013, His1026, and Cys1032. Positions 1058 to 1132 form a coiled coil; it reads NGIENDEEIK…ANLSQSLIHS (75 aa).

The protein belongs to the MYT1 family. As to quaternary structure, interacts with SIN3B. As to expression, brain.

It is found in the nucleus. It localises to the chromosome. Transcription factor that plays a key role in neuronal differentiation by specifically repressing expression of non-neuronal genes during neuron differentiation. In contrast to other transcription repressors that inhibit specific lineages, mediates repression of multiple differentiation programs. Also represses expression of negative regulators of neurogenesis, such as members of the Notch signaling pathway, including HES1. The combination of three transcription factors, ASCL1, POU3F2/BRN2 and MYT1L, is sufficient to reprogram fibroblasts and other somatic cells into induced neuronal (iN) cells in vitro. Directly binds the 5'-AAGTT-3' core motif present on the promoter of target genes and represses transcription by recruiting a multiprotein complex containing SIN3B. The 5'-AAGTT-3' core motif is absent from the promoter of neural genes. The sequence is that of Myelin transcription factor 1-like protein from Mus musculus (Mouse).